The primary structure comprises 288 residues: Phosphatidylserine decarboxylase proenzyme (288 aa).

Residues Asp92, His149, and Ser254 each act as charge relay system; for autoendoproteolytic cleavage activity in the active site. The active-site Schiff-base intermediate with substrate; via pyruvic acid; for decarboxylase activity is the Ser254. Ser254 carries the post-translational modification Pyruvic acid (Ser); by autocatalysis.

The protein belongs to the phosphatidylserine decarboxylase family. PSD-B subfamily. Prokaryotic type I sub-subfamily. As to quaternary structure, heterodimer of a large membrane-associated beta subunit and a small pyruvoyl-containing alpha subunit. Pyruvate serves as cofactor. Is synthesized initially as an inactive proenzyme. Formation of the active enzyme involves a self-maturation process in which the active site pyruvoyl group is generated from an internal serine residue via an autocatalytic post-translational modification. Two non-identical subunits are generated from the proenzyme in this reaction, and the pyruvate is formed at the N-terminus of the alpha chain, which is derived from the carboxyl end of the proenzyme. The autoendoproteolytic cleavage occurs by a canonical serine protease mechanism, in which the side chain hydroxyl group of the serine supplies its oxygen atom to form the C-terminus of the beta chain, while the remainder of the serine residue undergoes an oxidative deamination to produce ammonia and the pyruvoyl prosthetic group on the alpha chain. During this reaction, the Ser that is part of the protease active site of the proenzyme becomes the pyruvoyl prosthetic group, which constitutes an essential element of the active site of the mature decarboxylase.

The protein localises to the cell membrane. The enzyme catalyses a 1,2-diacyl-sn-glycero-3-phospho-L-serine + H(+) = a 1,2-diacyl-sn-glycero-3-phosphoethanolamine + CO2. Its pathway is phospholipid metabolism; phosphatidylethanolamine biosynthesis; phosphatidylethanolamine from CDP-diacylglycerol: step 2/2. Functionally, catalyzes the formation of phosphatidylethanolamine (PtdEtn) from phosphatidylserine (PtdSer). The polypeptide is Phosphatidylserine decarboxylase proenzyme (Bordetella petrii (strain ATCC BAA-461 / DSM 12804 / CCUG 43448)).